The chain runs to 313 residues: Tagatose-6-phosphate kinase (313 aa).

This sequence belongs to the carbohydrate kinase PfkB family. LacC subfamily.

It carries out the reaction D-tagatofuranose 6-phosphate + ATP = D-tagatofuranose 1,6-bisphosphate + ADP + H(+). It functions in the pathway carbohydrate metabolism; D-tagatose 6-phosphate degradation; D-glyceraldehyde 3-phosphate and glycerone phosphate from D-tagatose 6-phosphate: step 1/2. The protein is Tagatose-6-phosphate kinase of Enterococcus faecalis (strain ATCC 700802 / V583).